Consider the following 313-residue polypeptide: Homoserine O-acetyltransferase (313 aa).

The Acyl-thioester intermediate role is filled by C142. K163 and S191 together coordinate substrate. H234 acts as the Proton acceptor in catalysis. E236 is a catalytic residue. R248 serves as a coordination point for substrate.

This sequence belongs to the MetA family.

The protein localises to the cytoplasm. The enzyme catalyses L-homoserine + acetyl-CoA = O-acetyl-L-homoserine + CoA. It participates in amino-acid biosynthesis; L-methionine biosynthesis via de novo pathway; O-acetyl-L-homoserine from L-homoserine: step 1/1. Transfers an acetyl group from acetyl-CoA to L-homoserine, forming acetyl-L-homoserine. The polypeptide is Homoserine O-acetyltransferase (Streptococcus sanguinis (strain SK36)).